The primary structure comprises 121 residues: Large ribosomal subunit protein uL14 (121 aa).

The protein belongs to the universal ribosomal protein uL14 family. In terms of assembly, part of the 50S ribosomal subunit. Forms a cluster with proteins L3 and L19. In the 70S ribosome, L14 and L19 interact and together make contacts with the 16S rRNA in bridges B5 and B8.

Functionally, binds to 23S rRNA. Forms part of two intersubunit bridges in the 70S ribosome. The polypeptide is Large ribosomal subunit protein uL14 (Hydrogenobaculum sp. (strain Y04AAS1)).